We begin with the raw amino-acid sequence, 443 residues long: Glutamate-1-semialdehyde 2,1-aminomutase (443 aa).

An N6-(pyridoxal phosphate)lysine modification is found at K277.

Belongs to the class-III pyridoxal-phosphate-dependent aminotransferase family. HemL subfamily. Homodimer. The cofactor is pyridoxal 5'-phosphate.

It is found in the cytoplasm. It catalyses the reaction (S)-4-amino-5-oxopentanoate = 5-aminolevulinate. The protein operates within porphyrin-containing compound metabolism; protoporphyrin-IX biosynthesis; 5-aminolevulinate from L-glutamyl-tRNA(Glu): step 2/2. In Pseudarthrobacter chlorophenolicus (strain ATCC 700700 / DSM 12829 / CIP 107037 / JCM 12360 / KCTC 9906 / NCIMB 13794 / A6) (Arthrobacter chlorophenolicus), this protein is Glutamate-1-semialdehyde 2,1-aminomutase.